Here is a 269-residue protein sequence, read N- to C-terminus: Aquaporin-1 (269 aa).

At 1-11 (MASEIKKKLFW) the chain is on the cytoplasmic side. A helical transmembrane segment spans residues 12–29 (RAVVAEFLAMTLFVFISI). Residues 30-46 (GSALGFNYPLERNQTLV) lie on the Extracellular side of the membrane. A helical transmembrane segment spans residues 47–65 (QDNVKVSLAFGLSIATLAQ). Topologically, residues 66 to 68 (SVG) are cytoplasmic. The stretch at 69 to 82 (HISGAHLNPAVTLG) is an intramembrane region. The NPA 1 motif lies at 76–78 (NPA). The Cytoplasmic portion of the chain corresponds to 83–90 (LLLSCQIS). A helical transmembrane segment spans residues 91 to 109 (ILRAVMYIIAQCVGAIVAT). Residues 110–133 (AILSGITSSLVDNSLGRNDLAHGV) are Extracellular-facing. Residues 134 to 153 (NSGQGLGIEIIGTLQLVLCV) form a helical membrane-spanning segment. Over 154–163 (LATTDRRRRD) the chain is Cytoplasmic. The helical transmembrane segment at 164 to 181 (LGGSAPLAIGLSVALGHL) threads the bilayer. The Extracellular portion of the chain corresponds to 182 to 186 (LAIDY). Residues 187 to 199 (TGCGINPARSFGS) lie within the membrane without spanning it. The NPA 2 motif lies at 192–194 (NPA). Residues 200–206 (AVLTRNF) lie on the Extracellular side of the membrane. Asparagine 205 carries an N-linked (GlcNAc...) asparagine glycan. The helical transmembrane segment at 207-224 (SNHWIFWVGPFIGGALAV) threads the bilayer. Residues 225–269 (LIYDFILAPRSSDFTDRMKVWTSGQVEEYDLDADDINSRVEMKPK) are Cytoplasmic-facing. Residue serine 247 is modified to Phosphoserine. Position 253 is a phosphotyrosine (tyrosine 253). Residue serine 262 is modified to Phosphoserine.

The protein belongs to the MIP/aquaporin (TC 1.A.8) family. In terms of assembly, homotetramer; each monomer provides an independent water pore. Component of the ankyrin-1 complex in the erythrocyte, composed of ANK1, RHCE, RHAG, SLC4A1, EPB42, GYPA, GYPB and AQP1. Interacts with EPHB2; involved in endolymph production in the inner ear. Identified in a complex with STOM. Interacts (via the N-terminal) with ANK1 (via ANK 1-5 repeats). Interacts (via the C-terminal) with EPB42. Detected in erythrocytes (at protein level). In the kidney, expressed on luminal and basal borders of proximal tubules and in the thin limb of Henle's loop (at protein level).

It localises to the cell membrane. It carries out the reaction H2O(in) = H2O(out). The catalysed reaction is nitric oxide(out) = nitric oxide(in). It catalyses the reaction CO2(out) = CO2(in). The enzyme catalyses glycerol(in) = glycerol(out). It carries out the reaction H2O2(out) = H2O2(in). The catalysed reaction is K(+)(in) = K(+)(out). It catalyses the reaction Na(+)(in) = Na(+)(out). Forms a water channel that facilitates the transport of water across cell membranes, playing a crucial role in water homeostasis in various tissues. Could also be permeable to small solutes including hydrogen peroxide, glycerol and gases such as amonnia (NH3), nitric oxide (NO) and carbon dioxide (CO2). Recruited to the ankyrin-1 complex, a multiprotein complex of the erythrocyte membrane, it could be part of a CO2 metabolon, linking facilitated diffusion of CO2 across the membrane, anion exchange of Cl(-)/HCO3(-) and interconversion of dissolved CO2 and carbonic acid in the cytosol. In vitro, it shows non-selective gated cation channel activity and may be permeable to cations like K(+) and Na(+) in vivo. The sequence is that of Aquaporin-1 from Mus musculus (Mouse).